Reading from the N-terminus, the 1133-residue chain is Error-prone DNA polymerase (1133 aa).

The protein belongs to the DNA polymerase type-C family. DnaE2 subfamily.

The protein resides in the cytoplasm. It catalyses the reaction DNA(n) + a 2'-deoxyribonucleoside 5'-triphosphate = DNA(n+1) + diphosphate. Functionally, DNA polymerase involved in damage-induced mutagenesis and translesion synthesis (TLS). It is not the major replicative DNA polymerase. The polypeptide is Error-prone DNA polymerase (Anaeromyxobacter sp. (strain K)).